The following is a 375-amino-acid chain: Mitogen-activated protein kinase 4a (375 aa).

The Protein kinase domain occupies Lys39–Leu325. ATP contacts are provided by residues Ile45–Val53 and Lys68. Residue Asp165 is the Proton acceptor of the active site. Thr197 carries the phosphothreonine modification. Positions Thr197–Tyr199 match the TXY motif. Tyr199 is subject to Phosphotyrosine.

The protein belongs to the protein kinase superfamily. CMGC Ser/Thr protein kinase family. MAP kinase subfamily. Mg(2+) is required as a cofactor. In terms of processing, dually phosphorylated on Thr-197 and Tyr-199, which activates the enzyme. Phosphorylated in response to pathogen-associated molecular pattern (PAMP) chitin and in response to necrotrophic fungus B.cinerea spores. Not phosphorylated in response to osmotic stress. In terms of tissue distribution, expressed strongly in the apical cells of caulonemal air filaments and rhizoids in fully developed plants and less strongly, but readily detectable in filamentous protonemal tissue at the edge of the plant consisting of both chloronema and caulonema. When filamentous growth of protonema is promoted, the expression is strongest in newly formed apical tip cells of protonemal tissue.

Its subcellular location is the cytoplasm. The protein localises to the nucleus. The enzyme catalyses L-seryl-[protein] + ATP = O-phospho-L-seryl-[protein] + ADP + H(+). It carries out the reaction L-threonyl-[protein] + ATP = O-phospho-L-threonyl-[protein] + ADP + H(+). Its activity is regulated as follows. Activated by threonine and tyrosine phosphorylation. Activated in response to bacterial and fungal pathogen-associated molecular patterns (PAMPs) including chitin, chitosan and peptidyl glycans (PGNs). Activation in response to chitin requires the CERK1, MEKK1a/b, MKK1a/b/c and MPK4a/b signaling pathway. Activated in response to necrotrophic fungus B.cinerea spores. Not activated in response to osmotic stress. Functionally, the CERK1, MEKK1a/b, MKK1a/b/c and MPK4a/b proteins are involved in pathogen defense. The pathway induces rapid growth inhibition, cell wall depositions and accumulation of defense-related transcripts. This protein is required for innate immunity triggered by pathogen-associated molecular patterns (PAMPs). Involved in resistance to necrotrophic fungi B.cinerea and A.brassicicola. Involved in the transduction of signals from chitosan perception to the activation of defense genes. This is Mitogen-activated protein kinase 4a (MPK4a) from Physcomitrium patens (Spreading-leaved earth moss).